The chain runs to 426 residues: Dihydroorotase (426 aa).

Zn(2+)-binding residues include His58 and His60. Substrate-binding positions include 60 to 62 (HLR) and Asn92. Positions 150, 177, and 230 each coordinate Zn(2+). Residue Asn276 participates in substrate binding. Asp303 contacts Zn(2+). Asp303 is an active-site residue. His307 contributes to the substrate binding site.

The protein belongs to the metallo-dependent hydrolases superfamily. DHOase family. Class I DHOase subfamily. Zn(2+) serves as cofactor.

The enzyme catalyses (S)-dihydroorotate + H2O = N-carbamoyl-L-aspartate + H(+). It functions in the pathway pyrimidine metabolism; UMP biosynthesis via de novo pathway; (S)-dihydroorotate from bicarbonate: step 3/3. Catalyzes the reversible cyclization of carbamoyl aspartate to dihydroorotate. The polypeptide is Dihydroorotase (Acetivibrio thermocellus (strain ATCC 27405 / DSM 1237 / JCM 9322 / NBRC 103400 / NCIMB 10682 / NRRL B-4536 / VPI 7372) (Clostridium thermocellum)).